A 130-amino-acid chain; its full sequence is Sec-independent protein translocase protein TatB (130 aa).

Residues 1-21 (MFDISFTELIVIGIVALVVIG) traverse the membrane as a helical segment. The segment at 70 to 130 (VDSFQNSVHS…TPKEPRQSGS (61 aa)) is disordered. Composition is skewed to basic and acidic residues over residues 80 to 89 (EINKIQETAD) and 96 to 111 (PEKE…KTEP).

It belongs to the TatB family. As to quaternary structure, the Tat system comprises two distinct complexes: a TatABC complex, containing multiple copies of TatA, TatB and TatC subunits, and a separate TatA complex, containing only TatA subunits. Substrates initially bind to the TatABC complex, which probably triggers association of the separate TatA complex to form the active translocon.

The protein resides in the cell inner membrane. Functionally, part of the twin-arginine translocation (Tat) system that transports large folded proteins containing a characteristic twin-arginine motif in their signal peptide across membranes. Together with TatC, TatB is part of a receptor directly interacting with Tat signal peptides. TatB may form an oligomeric binding site that transiently accommodates folded Tat precursor proteins before their translocation. The polypeptide is Sec-independent protein translocase protein TatB (Nitrosomonas eutropha (strain DSM 101675 / C91 / Nm57)).